The following is a 194-amino-acid chain: Large ribosomal subunit protein bL25 (194 aa).

Belongs to the bacterial ribosomal protein bL25 family. CTC subfamily. In terms of assembly, part of the 50S ribosomal subunit; part of the 5S rRNA/L5/L18/L25 subcomplex. Contacts the 5S rRNA. Binds to the 5S rRNA independently of L5 and L18.

In terms of biological role, this is one of the proteins that binds to the 5S RNA in the ribosome where it forms part of the central protuberance. The protein is Large ribosomal subunit protein bL25 of Geotalea uraniireducens (strain Rf4) (Geobacter uraniireducens).